Reading from the N-terminus, the 537-residue chain is Pentatricopeptide repeat-containing protein At4g32450, mitochondrial (537 aa).

Residues 1-110 constitute a mitochondrion transit peptide; sequence MIYTLTRGSL…EHSEIINQRN (110 aa). Residues 113–140 are compositionally biased toward polar residues; it reads WQSSDGCSSYGTTGNGVPQENNTGGNHF. The disordered stretch occupies residues 113 to 148; sequence WQSSDGCSSYGTTGNGVPQENNTGGNHFQQDHSGHS. PPR repeat units lie at residues 145–179, 180–210, 215–249, 250–280, 281–316, and 317–347; these read SGHS…GYVV, DLPR…ITSS, DISA…NLET, WCGV…GNKP, DGEM…GIIP, and CMEH…MEPN. Residues 412–442 are type E(+) motif; that stretch reads YGIRYMAAGDISRPENRELYMALKSLKEHMI. The segment at 443–537 is type DYW motif; sequence EIGYVPLSKL…DGVCSCREYW (95 aa).

It belongs to the PPR family. PCMP-H subfamily.

The protein localises to the mitochondrion. This chain is Pentatricopeptide repeat-containing protein At4g32450, mitochondrial (PCMP-H63), found in Arabidopsis thaliana (Mouse-ear cress).